A 256-amino-acid polypeptide reads, in one-letter code: GDSL esterase/lipase At1g18120 (256 aa).

A signal peptide spans 1-49; that stretch reads MYRVYKNNKFILISIPRITNKLWQKNCNLVILLGVLLVLTLFHDPIIVA. The active-site Nucleophile is the Ser-67. Asn-181 carries an N-linked (GlcNAc...) asparagine glycan.

The protein belongs to the 'GDSL' lipolytic enzyme family.

It is found in the secreted. This Arabidopsis thaliana (Mouse-ear cress) protein is GDSL esterase/lipase At1g18120.